Reading from the N-terminus, the 181-residue chain is Peptidyl-tRNA hydrolase (181 aa).

Tyr14 contributes to the tRNA binding site. Residue His19 is the Proton acceptor of the active site. The tRNA site is built by Tyr62, Asn64, and Asn108.

Belongs to the PTH family. As to quaternary structure, monomer.

It localises to the cytoplasm. The catalysed reaction is an N-acyl-L-alpha-aminoacyl-tRNA + H2O = an N-acyl-L-amino acid + a tRNA + H(+). In terms of biological role, hydrolyzes ribosome-free peptidyl-tRNAs (with 1 or more amino acids incorporated), which drop off the ribosome during protein synthesis, or as a result of ribosome stalling. Its function is as follows. Catalyzes the release of premature peptidyl moieties from peptidyl-tRNA molecules trapped in stalled 50S ribosomal subunits, and thus maintains levels of free tRNAs and 50S ribosomes. This chain is Peptidyl-tRNA hydrolase, found in Campylobacter jejuni (strain RM1221).